A 95-amino-acid chain; its full sequence is Small ribosomal subunit protein bS6 (95 aa).

Belongs to the bacterial ribosomal protein bS6 family.

Functionally, binds together with bS18 to 16S ribosomal RNA. The polypeptide is Small ribosomal subunit protein bS6 (Bacillus cytotoxicus (strain DSM 22905 / CIP 110041 / 391-98 / NVH 391-98)).